The chain runs to 210 residues: Small ribosomal subunit protein uS4 (210 aa).

One can recognise an S4 RNA-binding domain in the interval 99-170; the sequence is RRLDNAVFRA…NLEAVVRRGV (72 aa).

This sequence belongs to the universal ribosomal protein uS4 family. As to quaternary structure, part of the 30S ribosomal subunit. Contacts protein S5. The interaction surface between S4 and S5 is involved in control of translational fidelity.

Its function is as follows. One of the primary rRNA binding proteins, it binds directly to 16S rRNA where it nucleates assembly of the body of the 30S subunit. With S5 and S12 plays an important role in translational accuracy. The polypeptide is Small ribosomal subunit protein uS4 (Desulfotalea psychrophila (strain LSv54 / DSM 12343)).